Reading from the N-terminus, the 611-residue chain is Dihydroxy-acid dehydratase (611 aa).

Asp-81 serves as a coordination point for Mg(2+). Cys-122 contributes to the [2Fe-2S] cluster binding site. Mg(2+)-binding residues include Asp-123 and Lys-124. Lys-124 is modified (N6-carboxylysine). [2Fe-2S] cluster is bound at residue Cys-195. Glu-491 provides a ligand contact to Mg(2+). Residue Ser-517 is the Proton acceptor of the active site.

Belongs to the IlvD/Edd family. In terms of assembly, homodimer. [2Fe-2S] cluster serves as cofactor. Requires Mg(2+) as cofactor.

The catalysed reaction is (2R)-2,3-dihydroxy-3-methylbutanoate = 3-methyl-2-oxobutanoate + H2O. The enzyme catalyses (2R,3R)-2,3-dihydroxy-3-methylpentanoate = (S)-3-methyl-2-oxopentanoate + H2O. The protein operates within amino-acid biosynthesis; L-isoleucine biosynthesis; L-isoleucine from 2-oxobutanoate: step 3/4. Its pathway is amino-acid biosynthesis; L-valine biosynthesis; L-valine from pyruvate: step 3/4. Functionally, functions in the biosynthesis of branched-chain amino acids. Catalyzes the dehydration of (2R,3R)-2,3-dihydroxy-3-methylpentanoate (2,3-dihydroxy-3-methylvalerate) into 2-oxo-3-methylpentanoate (2-oxo-3-methylvalerate) and of (2R)-2,3-dihydroxy-3-methylbutanoate (2,3-dihydroxyisovalerate) into 2-oxo-3-methylbutanoate (2-oxoisovalerate), the penultimate precursor to L-isoleucine and L-valine, respectively. This Brucella melitensis biotype 1 (strain ATCC 23456 / CCUG 17765 / NCTC 10094 / 16M) protein is Dihydroxy-acid dehydratase.